Reading from the N-terminus, the 280-residue chain is Energy-coupling factor transporter ATP-binding protein EcfA1 (280 aa).

The region spanning 6–241 is the ABC transporter domain; it reads LRTENISFQY…SHMLQEIGLD (236 aa). 40–47 provides a ligand contact to ATP; that stretch reads GQNGSGKS.

It belongs to the ABC transporter superfamily. Energy-coupling factor EcfA family. Forms a stable energy-coupling factor (ECF) transporter complex composed of 2 membrane-embedded substrate-binding proteins (S component), 2 ATP-binding proteins (A component) and 2 transmembrane proteins (T component).

The protein resides in the cell membrane. ATP-binding (A) component of a common energy-coupling factor (ECF) ABC-transporter complex. Unlike classic ABC transporters this ECF transporter provides the energy necessary to transport a number of different substrates. The sequence is that of Energy-coupling factor transporter ATP-binding protein EcfA1 from Bacillus thuringiensis subsp. konkukian (strain 97-27).